A 445-amino-acid polypeptide reads, in one-letter code: Argininosuccinate synthase (445 aa).

ATP contacts are provided by residues 17–25 (AFSGGLDTS) and alanine 43. Tyrosine 99 is an L-citrulline binding site. Glycine 129 and threonine 131 together coordinate ATP. L-aspartate is bound by residues threonine 131, asparagine 135, and aspartate 136. An L-citrulline-binding site is contributed by asparagine 135. Aspartate 136 is a binding site for ATP. Positions 139 and 192 each coordinate L-citrulline. ATP is bound at residue aspartate 194. L-citrulline is bound by residues threonine 201, glutamate 203, and glutamate 280.

Belongs to the argininosuccinate synthase family. Type 2 subfamily. As to quaternary structure, homotetramer.

It is found in the cytoplasm. The enzyme catalyses L-citrulline + L-aspartate + ATP = 2-(N(omega)-L-arginino)succinate + AMP + diphosphate + H(+). Its pathway is amino-acid biosynthesis; L-arginine biosynthesis; L-arginine from L-ornithine and carbamoyl phosphate: step 2/3. The protein is Argininosuccinate synthase of Afipia carboxidovorans (strain ATCC 49405 / DSM 1227 / KCTC 32145 / OM5) (Oligotropha carboxidovorans).